Consider the following 222-residue polypeptide: Collectrin (222 aa).

A signal peptide spans 1–14 (MLWALFFLVTTIHA). At 15 to 141 (ELCHPDAENA…LAPPMEPSVP (127 aa)) the chain is on the extracellular side. Positions 21–222 (AENAFKVRLS…LTEDERLTPL (202 aa)) constitute a Collectrin-like domain. Asn-76 and Asn-93 each carry an N-linked (GlcNAc...) asparagine glycan. The chain crosses the membrane as a helical span at residues 142–162 (VWIIVFGVIFCIVTVAIALLV). At 163–222 (LSGIRQRRRNNKGPPGVEDAEDKCENIITIENGIPCDPLDMKGGHINDGFLTEDERLTPL) the chain is on the cytoplasmic side. Thr-214 and Thr-220 each carry phosphothreonine.

It belongs to the CLTRN family. As to quaternary structure, monomer. Homodimer. Homodimer; dimerization prevents CLTRN cleavage by BACE2. Interacts with SNAPIN. Interacts with SLC6A18; this interaction regulates the trafficking of SLC6A18 to the cell membrane and its amino acid transporter activity. Interacts with SLC6A19; this interaction regulates the trafficking of SLC6A19 to the cell membrane and its amino acid transporter activity. Interacts with SLC6A20B. Glycosylated. Glycosylation is required for plasma membrane localization and for its cleavage by BACE2. Post-translationally, proteolytically processed in pancreatic beta cells by BACE2 leading to the generation and extracellular release of soluble CLTRN, and a corresponding cell-associated C-terminal fragment which is later cleaved by gamma-secretase. This shedding process inactivates CLTRN. Three cleavage sites have been identified for BACE2, two clustered sites after Phe-116 and Leu-118 and a more membrane proximal site at Phe-125; the preferred BACE2 cleavage site seems to be between Phe-125 and Leu-126, Phe-116 and Leu-118 act as alternative sites. Expressed on the apical surface of the proximal tubules in the renal cortex (at protein level). Kidney; collecting ducts and proximal tubule. Pancreas; beta cells of islets. Expressed in the cerebral cortex, hippocampus, brainstem and cerebellum.

Its subcellular location is the cell membrane. Functionally, plays an important role in amino acid transport by acting as binding partner of amino acid transporters SLC6A18 and SLC6A19, regulating their trafficking on the cell surface and their activity. May also play a role in trafficking of amino acid transporters SLC3A1 and SLC7A9 to the renal cortical cell membrane. Regulator of SNARE complex function. Stimulator of beta cell replication. This Mus musculus (Mouse) protein is Collectrin.